Reading from the N-terminus, the 283-residue chain is Aquaporin PIP2-5 (283 aa).

Helical transmembrane passes span 37–57 and 74–94; these read AVIAEFVATLLFLYVTVATVI and CGGVGVLGIAWAFGGMIFILV. Positions 106 to 108 match the NPA 1 motif; it reads NPA. The next 3 membrane-spanning stretches (helical) occupy residues 125–145, 167–187, and 199–219; these read ILYIVAQCLGAVCGVALVKGF, GTGLAAEIIGTFVLVYTVFSA, and VPVLAPLPIGFAVFMVHLATI. The NPA 2 signature appears at 227-229; sequence NPA. Residues 249-269 form a helical membrane-spanning segment; it reads IFWVGPFIGAAIAALYHQIVL.

This sequence belongs to the MIP/aquaporin (TC 1.A.8) family. PIP (TC 1.A.8.11) subfamily. In terms of tissue distribution, expressed in roots.

Its subcellular location is the cell membrane. Functionally, water channel required to facilitate the transport of water across cell membrane. May play a role in root water uptake. The sequence is that of Aquaporin PIP2-5 (PIP2-5) from Oryza sativa subsp. japonica (Rice).